The following is a 306-amino-acid chain: Ribonuclease BN (306 aa).

Positions 64, 66, 68, 69, 141, 212, and 270 each coordinate Zn(2+). The active-site Proton acceptor is the D68.

Belongs to the RNase Z family. RNase BN subfamily. As to quaternary structure, homodimer. Requires Zn(2+) as cofactor.

Its function is as follows. Zinc phosphodiesterase, which has both exoribonuclease and endoribonuclease activities. The polypeptide is Ribonuclease BN (Klebsiella pneumoniae subsp. pneumoniae (strain ATCC 700721 / MGH 78578)).